The primary structure comprises 359 residues: uncharacterized protein (359 aa).

The signal sequence occupies residues 1 to 17; the sequence is MLGRSLTSVLIVPTGIG. Cysteine 18 is lipidated: N-palmitoyl cysteine. Cysteine 18 carries S-diacylglycerol cysteine lipidation.

The protein resides in the cell membrane. This is an uncharacterized protein from Synechococcus sp. (strain ATCC 27144 / PCC 6301 / SAUG 1402/1) (Anacystis nidulans).